The chain runs to 865 residues: Catenin alpha-2 (865 aa).

Basic and acidic residues predominate over residues 823 to 839 (PEKKPLVKREKPEECQT). A disordered region spans residues 823 to 851 (PEKKPLVKREKPEECQTRVRRGSQKKHIS). Positions 840–850 (RVRRGSQKKHI) are enriched in basic residues.

The protein belongs to the vinculin/alpha-catenin family.

Its subcellular location is the cell membrane. The protein resides in the cytoplasm. The protein localises to the cytoskeleton. It localises to the cell junction. It is found in the adherens junction. Its subcellular location is the cell projection. The protein resides in the axon. The protein localises to the nucleus. Its function is as follows. May function as a linker between cadherin adhesion receptors and the cytoskeleton to regulate cell-cell adhesion and differentiation in the nervous system. The polypeptide is Catenin alpha-2 (Ctnna2) (Danio rerio (Zebrafish)).